Reading from the N-terminus, the 492-residue chain is Target of Myb1 membrane trafficking protein (492 aa).

Met1 bears the N-acetylmethionine mark. Ser11 carries the post-translational modification Phosphoserine. One can recognise a VHS domain in the interval 20 to 152 (ATDGSLQSED…DLRRKGLEFP (133 aa)). The short motif at 48–56 (KDAFRAVKK) is the KRKK element. Ser160 carries the phosphoserine modification. Position 164 is a phosphothreonine (Thr164). Over residues 167–195 (RTVFNSETPSRQNSVSSNTSQRGDLSQHA) the composition is skewed to polar residues. The interval 167–215 (RTVFNSETPSRQNSVSSNTSQRGDLSQHATPLPTPAVLPGDSPITPTPE) is disordered. Phosphoserine is present on residues Ser176, Ser180, and Ser208. The region spanning 215–303 (EQIGKLRSEL…VFLRHERFER (89 aa)) is the GAT domain. The interval 321–326 (DLIDMG) is clathrin box. Phosphoserine is present on residues Ser355 and Ser376. Residue Lys385 forms a Glycyl lysine isopeptide (Lys-Gly) (interchain with G-Cter in SUMO2) linkage. Residues 392–463 (TDGLAGALDA…ADRLPNLASP (72 aa)) are interaction with MYO6. The tract at residues 450 to 492 (RAKAADRLPNLASPSAEGPPRPSPGTAPRRKTQEKDDDMLFAL) is disordered. Ser462 is modified (phosphoserine).

The protein belongs to the TOM1 family. In terms of assembly, found in a complex with TOLLIP; interacts (via GAT domain) with TOLLIP (via N-terminus); the interactions leads to TOM1-recruitment to endosomes and inhibition of TOLLIP binding to PtdIns(3)P. Interacts (via GAT domain and the C-terminal part of the VHS domain) with UBC/ubiquitin. Interacts (via clathrin box and C-terminus) with clathrin heavy chain. Interacts with MYO6. Interacts with TAX1BP1; CALCOCO2/NDP52 and OPTN; the interaction is indirect and is mediated by MYO6, which acts as a bridge between TOM1 and the three autophagy receptors. Interacts (via C-terminus) with ZFYVE16 (via C-terminus); interaction is required to target TOM1 and clathrin to endosomes. Interacts with LRBA. In terms of processing, monoubiquitinated. In terms of tissue distribution, ubiquitous. In adult brain, it is highly expressed at the mesencephalic level, in the hippocampal formation and medial lemniscus. In cerebellum, it is highly expressed in Purkinje cells and granular layers.

Its subcellular location is the cytoplasm. It is found in the endosome membrane. It localises to the early endosome membrane. Adapter protein that plays a role in the intracellular membrane trafficking of ubiquitinated proteins, thereby participating in autophagy, ubiquitination-dependent signaling and receptor recycling pathways. Acts as a MYO6/Myosin VI adapter protein that targets MYO6 to endocytic structures. Together with MYO6, required for autophagosomal delivery of endocytic cargo, the maturation of autophagosomes and their fusion with lysosomes. MYO6 links TOM1 with autophagy receptors, such as TAX1BP1; CALCOCO2/NDP52 and OPTN. Binds to polyubiquitinated proteins via its GAT domain. In a complex with TOLLIP, recruits ubiquitin-conjugated proteins onto early endosomes. The Tom1-Tollip complex may regulate endosomal trafficking by linking polyubiquitinated proteins to clathrin. Mediates clathrin recruitment to early endosomes by ZFYVE16. Modulates binding of TOLLIP to phosphatidylinositol 3-phosphate (PtdIns(3)P) via binding competition; the association with TOLLIP may favor the release of TOLLIP from endosomal membranes, allowing TOLLIP to commit to cargo trafficking. Acts as a phosphatidylinositol 5-phosphate (PtdIns(5)P) effector by binding to PtdIns(5)P, thereby regulating endosomal maturation. PtdIns(5)P-dependent recruitment to signaling endosomes may block endosomal maturation. Also inhibits Toll-like receptor (TLR) signaling and participates in immune receptor recycling. The protein is Target of Myb1 membrane trafficking protein of Mus musculus (Mouse).